The chain runs to 319 residues: mRNA decay activator protein ZFP36 (319 aa).

The tract at residues 1–15 (MDLSAIYESLQSMSH) is necessary for nuclear export. The necessary and sufficient for the association with mRNA decay enzymes and mRNA decay activation stretch occupies residues 1–92 (MDLSAIYESL…PTSPTATPTT (92 aa)). Necessary for localization of ARE-containing mRNAs to processing bodies (PBs) regions lie at residues 1-166 (MDLS…DLAL) and 92-319 (TSSR…SVSE). S52 is subject to Phosphoserine; by MAPKAPK2. S58 is modified (phosphoserine). One copy of the P-P-P-P-G repeat lies at 63–67 (PPPPG). Over residues 65-84 (PPGFAPLAPRPGPELSPSPT) the composition is skewed to pro residues. The interval 65 to 95 (PPGFAPLAPRPGPELSPSPTSPTATPTTSSR) is disordered. 2 positions are modified to phosphoserine: S80 and S82. Position 84 is a phosphothreonine (T84). Residue S85 is modified to Phosphoserine. A compositionally biased stretch (low complexity) spans 85 to 94 (SPTATPTTSS). Positions 87–160 (TATPTTSSRY…GSRCHFIHNP (74 aa)) are necessary for nuclear localization. Residues 89-165 (TPTTSSRYKT…FIHNPTEDLA (77 aa)) are necessary for RNA-binding. 2 C3H1-type zinc fingers span residues 95–123 (RYKT…HGLG) and 133–161 (KYKT…HNPT). The interval 95–186 (RYKTELCRTY…ISFSGLPSGR (92 aa)) is necessary for interaction with PABPN1. The tract at residues 166 to 319 (LPGQPHVLRQ…PIFNRISVSE (154 aa)) is necessary for mRNA decay activation. S178 carries the phosphoserine; by MAPKAPK2 modification. Low complexity predominate over residues 179-188 (FSGLPSGRRS). Residues 179-309 (FSGLPSGRRS…PQTPAPPRRL (131 aa)) form a disordered region. S189 is modified (phosphoserine). Residues 190 to 194 (PPPPG) form a P-P-P-P-G repeat. Positions 196-208 (SGPSLSSCSFSPS) are enriched in low complexity. S210 bears the Phosphoserine mark. The stretch at 211-215 (PPPPG) is one P-P-P-P-G repeat. The residue at position 220 (S220) is a Phosphoserine; by MAPK1; in vitro. The residue at position 250 (T250) is a Phosphothreonine. Phosphoserine is present on residues S269, S289, and S316. Residues 279 to 289 (SSGSSLGGSDS) are compositionally biased toward low complexity. The segment at 305–319 (PPRRLPIFNRISVSE) is interaction with CNOT1.

In terms of assembly, associates with cytoplasmic CCR4-NOT and PAN2-PAN3 deadenylase complexes to trigger ARE-containing mRNA deadenylation and decay processes. Part of a mRNA decay activation complex at least composed of poly(A)-specific exoribonucleases CNOT6, EXOSC2 and XRN1 and mRNA-decapping enzymes DCP1A and DCP2. Associates with the RNA exosome complex. Interacts (via phosphorylated form) with 14-3-3 proteins; these interactions promote exclusion of ZFP36 from cytoplasmic stress granules in response to arsenite treatment in a MAPKAPK2-dependent manner and does not prevent CCR4-NOT deadenylase complex recruitment or ZFP36-induced ARE-containing mRNA deadenylation and decay processes. Interacts with 14-3-3 proteins; these interactions occur in response to rapamycin in an Akt-dependent manner. Interacts with AGO2 and AGO4. Interacts (via C-terminus) with CNOT1; this interaction occurs in a RNA-independent manner and induces mRNA deadenylation. Interacts (via N-terminus) with CNOT6. Interacts with CNOT6L. Interacts (via C-terminus) with CNOT7; this interaction occurs in a RNA-independent manner, induces mRNA deadenylation and is inhibited in a phosphorylation MAPKAPK2-dependent manner. Interacts (via unphosphorylated form) with CNOT8; this interaction occurs in a RNA-independent manner and is inhibited in a phosphorylation MAPKAPK2-dependent manner. Interacts with DCP1A. Interacts (via N-terminus) with DCP2. Interacts with EDC3. Interacts (via N-terminus) with EXOSC2. Interacts with heat shock 70 kDa proteins. Interacts with KHSRP; this interaction increases upon cytokine-induced treatment. Interacts with MAP3K4; this interaction enhances the association with SH3KBP1/CIN85. Interacts with MAPKAPK2; this interaction occurs upon skeletal muscle satellite cell activation. Interacts with NCL. Interacts with NUP214; this interaction increases upon lipopolysaccharide (LPS) stimulation. Interacts with PABPC1; this interaction occurs in a RNA-dependent manner. Interacts (via hypophosphorylated form) with PABPN1 (via RRM domain and C-terminal arginine-rich region); this interaction occurs in the nucleus in a RNA-independent manner, decreases in presence of single-stranded poly(A) RNA-oligomer and in a p38 MAPK-dependent-manner and inhibits nuclear poly(A) tail synthesis. Interacts with PAN2. Interacts (via C3H1-type zinc finger domains) with PKM. Interacts (via C3H1-type zinc finger domains) with nuclear RNA poly(A) polymerase. Interacts with PPP2CA; this interaction occurs in LPS-stimulated cells and induces ZFP36 dephosphorylation, and hence may promote ARE-containing mRNAs decay. Interacts (via C-terminus) with PRR5L (via C-terminus); this interaction may accelerate ZFP36-mediated mRNA decay during stress. Interacts (via C-terminus) with SFN; this interaction occurs in a phosphorylation-dependent manner. Interacts (via extreme C-terminal region) with SH3KBP1/CIN85 (via SH3 domains); this interaction enhances MAP3K4-induced phosphorylation of ZFP36 at Ser-58 and Ser-85 and does not alter neither ZFP36 binding to ARE-containing transcripts nor TNF-alpha mRNA decay. Interacts with XRN1. Interacts (via C-terminus and Ser-178 phosphorylated form) with YWHAB; this interaction occurs in a p38/MAPKAPK2-dependent manner, increases cytoplasmic localization of ZFP36 and protects ZFP36 from Ser-178 dephosphorylation by serine/threonine phosphatase 2A, and hence may be crucial for stabilizing ARE-containing mRNAs. Interacts (via phosphorylated form) with YWHAE. Interacts (via C-terminus) with YWHAG; this interaction occurs in a phosphorylation-dependent manner. Interacts with YWHAH; this interaction occurs in a phosphorylation-dependent manner. Interacts with YWHAQ; this interaction occurs in a phosphorylation-dependent manner. Interacts with (via C-terminus) YWHAZ; this interaction occurs in a phosphorylation-dependent manner. Does not interact with SH3KBP1. Interacts (via the 4EHP-binding motif) with EIF4E2; the interaction is direct. Interacts (via P-P-P-P-G repeats) with GIGYF2; the interaction is direct. Phosphorylated. Phosphorylation at serine and/or threonine residues occurs in a p38 MAPK- and MAPKAPK2-dependent manner. Phosphorylated by MAPKAPK2 at Ser-52 and Ser-178; phosphorylation increases its stability and cytoplasmic localization, promotes binding to 14-3-3 adapter proteins and inhibits the recruitment of cytoplasmic CCR4-NOT and PAN2-PAN3 deadenylase complexes to the mRNA decay machinery, thereby inhibiting ZFP36-induced ARE-containing mRNA deadenylation and decay processes. Phosphorylation by MAPKAPK2 does not impair ARE-containing RNA-binding. Phosphorylated in a MAPKAPK2- and p38 MAPK-dependent manner upon skeletal muscle satellite cell activation; this phosphorylation inhibits ZFP36-mediated mRNA decay activity, and hence stabilizes MYOD1 mRNA. Phosphorylated by MAPK1 upon mitogen stimulation. Phosphorylated at Ser-58 and Ser-85; these phosphorylations increase in a SH3KBP1-dependent manner. Phosphorylated at serine and threonine residues in a pyruvate kinase PKM- and p38 MAPK-dependent manner. Phosphorylation at Ser-52 may participate in the PKM-mediated degradation of ZFP36 in a p38 MAPK-dependent manner. Dephosphorylated by serine/threonine phosphatase 2A at Ser-178. Post-translationally, ubiquitinated; pyruvate kinase (PKM)-dependent ubiquitination leads to proteasomal degradation through a p38 MAPK signaling pathway. In terms of tissue distribution, expressed in skeletal muscle satellite cells. Strongly expressed in differentiated adipocytes compared to preadipocytes (at protein level). Expressed in embryonic stem cells (ESCs). Expressed in heart, placenta, kidney, intestine, liver, lung, thymus, fat and spleen.

The protein resides in the nucleus. Its subcellular location is the cytoplasm. It localises to the cytoplasmic granule. The protein localises to the P-body. Zinc-finger RNA-binding protein that destabilizes numerous cytoplasmic AU-rich element (ARE)-containing mRNA transcripts by promoting their poly(A) tail removal or deadenylation, and hence provide a mechanism for attenuating protein synthesis. Acts as an 3'-untranslated region (UTR) ARE mRNA-binding adapter protein to communicate signaling events to the mRNA decay machinery. Recruits deadenylase CNOT7 (and probably the CCR4-NOT complex) via association with CNOT1, and hence promotes ARE-mediated mRNA deadenylation. Also functions by recruiting components of the cytoplasmic RNA decay machinery to the bound ARE-containing mRNAs. Self-regulates by destabilizing its own mRNA. Binds to 3'-UTR ARE of numerous mRNAs and of its own mRNA. Plays a role in anti-inflammatory responses; suppresses tumor necrosis factor (TNF)-alpha production by stimulating ARE-mediated TNF-alpha mRNA decay and several other inflammatory ARE-containing mRNAs in interferon (IFN)- and/or lipopolysaccharide (LPS)-induced macrophages. Also plays a role in the regulation of dendritic cell maturation at the post-transcriptional level, and hence operates as part of a negative feedback loop to limit the inflammatory response. Promotes ARE-mediated mRNA decay of hypoxia-inducible factor HIF1A mRNA during the response of endothelial cells to hypoxia. Positively regulates early adipogenesis of preadipocytes by promoting ARE-mediated mRNA decay of immediate early genes (IEGs). Negatively regulates hematopoietic/erythroid cell differentiation by promoting ARE-mediated mRNA decay of the transcription factor STAT5B mRNA. Plays a role in maintaining skeletal muscle satellite cell quiescence by promoting ARE-mediated mRNA decay of the myogenic determination factor MYOD1 mRNA. Also associates with and regulates the expression of non-ARE-containing target mRNAs at the post-transcriptional level, such as MHC class I mRNAs. Participates in association with argonaute RISC catalytic components in the ARE-mediated mRNA decay mechanism; assists microRNA (miRNA) targeting ARE-containing mRNAs. May also play a role in the regulation of cytoplasmic mRNA decapping; enhances decapping of ARE-containing RNAs, in vitro. Involved in the delivery of target ARE-mRNAs to processing bodies (PBs). In addition to its cytosolic mRNA-decay function, affects nuclear pre-mRNA processing. Negatively regulates nuclear poly(A)-binding protein PABPN1-stimulated polyadenylation activity on ARE-containing pre-mRNA during LPS-stimulated macrophages. Also involved in the regulation of stress granule (SG) and P-body (PB) formation and fusion. Plays a role in the regulation of keratinocyte proliferation, differentiation and apoptosis. Plays a role as a tumor suppressor by inhibiting cell proliferation in breast cancer cells. The polypeptide is mRNA decay activator protein ZFP36 (Mus musculus (Mouse)).